Here is a 302-residue protein sequence, read N- to C-terminus: UDP-3-O-acyl-N-acetylglucosamine deacetylase (302 aa).

Residues His-78, His-235, and Asp-239 each coordinate Zn(2+). His-262 functions as the Proton donor in the catalytic mechanism.

It belongs to the LpxC family. The cofactor is Zn(2+).

The catalysed reaction is a UDP-3-O-[(3R)-3-hydroxyacyl]-N-acetyl-alpha-D-glucosamine + H2O = a UDP-3-O-[(3R)-3-hydroxyacyl]-alpha-D-glucosamine + acetate. The protein operates within glycolipid biosynthesis; lipid IV(A) biosynthesis; lipid IV(A) from (3R)-3-hydroxytetradecanoyl-[acyl-carrier-protein] and UDP-N-acetyl-alpha-D-glucosamine: step 2/6. Functionally, catalyzes the hydrolysis of UDP-3-O-myristoyl-N-acetylglucosamine to form UDP-3-O-myristoylglucosamine and acetate, the committed step in lipid A biosynthesis. In Bdellovibrio bacteriovorus (strain ATCC 15356 / DSM 50701 / NCIMB 9529 / HD100), this protein is UDP-3-O-acyl-N-acetylglucosamine deacetylase.